The sequence spans 353 residues: Protein RecA (353 aa).

67 to 74 contacts ATP; that stretch reads GPESSGKT.

The protein belongs to the RecA family.

The protein resides in the cytoplasm. Its function is as follows. Can catalyze the hydrolysis of ATP in the presence of single-stranded DNA, the ATP-dependent uptake of single-stranded DNA by duplex DNA, and the ATP-dependent hybridization of homologous single-stranded DNAs. It interacts with LexA causing its activation and leading to its autocatalytic cleavage. The chain is Protein RecA from Salmonella paratyphi A (strain ATCC 9150 / SARB42).